The chain runs to 240 residues: tRNA (guanine-N(1)-)-methyltransferase (240 aa).

Residues glycine 110 and 129 to 134 (LGDFVL) contribute to the S-adenosyl-L-methionine site.

Belongs to the RNA methyltransferase TrmD family. Homodimer.

The protein localises to the cytoplasm. It catalyses the reaction guanosine(37) in tRNA + S-adenosyl-L-methionine = N(1)-methylguanosine(37) in tRNA + S-adenosyl-L-homocysteine + H(+). Specifically methylates guanosine-37 in various tRNAs. This Clostridium botulinum (strain 657 / Type Ba4) protein is tRNA (guanine-N(1)-)-methyltransferase.